Here is a 224-residue protein sequence, read N- to C-terminus: 7-cyano-7-deazaguanine synthase 1 (224 aa).

Residue 10-20 coordinates ATP; the sequence is LSGGLDSMVCA. The Zn(2+) site is built by cysteine 189, cysteine 199, cysteine 202, and cysteine 205.

Belongs to the QueC family. Requires Zn(2+) as cofactor.

The enzyme catalyses 7-carboxy-7-deazaguanine + NH4(+) + ATP = 7-cyano-7-deazaguanine + ADP + phosphate + H2O + H(+). It participates in purine metabolism; 7-cyano-7-deazaguanine biosynthesis. Catalyzes the ATP-dependent conversion of 7-carboxy-7-deazaguanine (CDG) to 7-cyano-7-deazaguanine (preQ(0)). In Sphingopyxis alaskensis (strain DSM 13593 / LMG 18877 / RB2256) (Sphingomonas alaskensis), this protein is 7-cyano-7-deazaguanine synthase 1.